A 198-amino-acid chain; its full sequence is MEHYISLFVKSVFIENMALSFFLGMCTFLAVSKKVSTAFGLGVAVTVVLGISVPVNQLVYSLILKDGALIDGVDLSFLNFITFIGVIAALVQILEMILDKYFPALYNALGIFLPLITVNCAIFGGVSFMVQRDYNFAESIVYGIGAGTGWMLAIVALAGITEKMKYADVPAGLRGLGITFITVGLMALGFMSFSGVQL.

The next 6 helical transmembrane spans lie at 11–31 (SVFI…FLAV), 35–55 (VSTA…SVPV), 77–97 (FLNF…LEMI), 110–130 (GIFL…SFMV), 140–160 (IVYG…LAGI), and 176–196 (LGIT…FSGV).

The protein belongs to the NqrDE/RnfAE family. Composed of six subunits; NqrA, NqrB, NqrC, NqrD, NqrE and NqrF.

The protein resides in the cell inner membrane. The catalysed reaction is a ubiquinone + n Na(+)(in) + NADH + H(+) = a ubiquinol + n Na(+)(out) + NAD(+). Functionally, NQR complex catalyzes the reduction of ubiquinone-1 to ubiquinol by two successive reactions, coupled with the transport of Na(+) ions from the cytoplasm to the periplasm. NqrA to NqrE are probably involved in the second step, the conversion of ubisemiquinone to ubiquinol. This is Na(+)-translocating NADH-quinone reductase subunit E from Histophilus somni (strain 2336) (Haemophilus somnus).